A 262-amino-acid polypeptide reads, in one-letter code: Cytochrome b mRNA maturase bI2 (262 aa).

This sequence belongs to the LAGLIDADG endonuclease family.

The protein resides in the mitochondrion. In terms of biological role, this protein is responsible for splicing and maturation of cytochrome b mRNA. Specifically, it may be responsible for the splicing specificity of the second intron. This is Cytochrome b mRNA maturase bI2 (bI2) from Debaryomyces hansenii (strain ATCC 36239 / CBS 767 / BCRC 21394 / JCM 1990 / NBRC 0083 / IGC 2968) (Yeast).